We begin with the raw amino-acid sequence, 231 residues long: 2-C-methyl-D-erythritol 4-phosphate cytidylyltransferase (231 aa).

This sequence belongs to the IspD/TarI cytidylyltransferase family. IspD subfamily.

The enzyme catalyses 2-C-methyl-D-erythritol 4-phosphate + CTP + H(+) = 4-CDP-2-C-methyl-D-erythritol + diphosphate. Its pathway is isoprenoid biosynthesis; isopentenyl diphosphate biosynthesis via DXP pathway; isopentenyl diphosphate from 1-deoxy-D-xylulose 5-phosphate: step 2/6. Its function is as follows. Catalyzes the formation of 4-diphosphocytidyl-2-C-methyl-D-erythritol from CTP and 2-C-methyl-D-erythritol 4-phosphate (MEP). The polypeptide is 2-C-methyl-D-erythritol 4-phosphate cytidylyltransferase (Fusobacterium nucleatum subsp. nucleatum (strain ATCC 25586 / DSM 15643 / BCRC 10681 / CIP 101130 / JCM 8532 / KCTC 2640 / LMG 13131 / VPI 4355)).